The following is a 174-amino-acid chain: ATP-dependent protease subunit HslV (174 aa).

Thr-2 is an active-site residue. Residues Gly-157, Cys-160, and Thr-163 each contribute to the Na(+) site.

Belongs to the peptidase T1B family. HslV subfamily. In terms of assembly, a double ring-shaped homohexamer of HslV is capped on each side by a ring-shaped HslU homohexamer. The assembly of the HslU/HslV complex is dependent on binding of ATP.

It localises to the cytoplasm. It catalyses the reaction ATP-dependent cleavage of peptide bonds with broad specificity.. With respect to regulation, allosterically activated by HslU binding. In terms of biological role, protease subunit of a proteasome-like degradation complex believed to be a general protein degrading machinery. This Yersinia pseudotuberculosis serotype I (strain IP32953) protein is ATP-dependent protease subunit HslV.